A 132-amino-acid polypeptide reads, in one-letter code: Small ribosomal subunit protein uS8 (132 aa).

It belongs to the universal ribosomal protein uS8 family. In terms of assembly, part of the 30S ribosomal subunit. Contacts proteins S5 and S12.

Its function is as follows. One of the primary rRNA binding proteins, it binds directly to 16S rRNA central domain where it helps coordinate assembly of the platform of the 30S subunit. In Syntrophobacter fumaroxidans (strain DSM 10017 / MPOB), this protein is Small ribosomal subunit protein uS8.